The chain runs to 122 residues: Class I hydrophobin 2 (122 aa).

A signal peptide spans methionine 1–alanine 22. Cystine bridges form between cysteine 40/cysteine 101, cysteine 47/cysteine 95, cysteine 48/cysteine 81, and cysteine 102/cysteine 115.

It belongs to the fungal hydrophobin family. In terms of assembly, self-assembles to form functional amyloid fibrils called rodlets. Self-assembly into fibrillar rodlets occurs spontaneously at hydrophobic:hydrophilic interfaces and the rodlets further associate laterally to form amphipathic monolayers.

The protein resides in the secreted. The protein localises to the cell wall. Its function is as follows. Aerial growth, conidiation, and dispersal of filamentous fungi in the environment rely upon a capability of their secreting small amphipathic proteins called hydrophobins (HPBs) with low sequence identity. Class I can self-assemble into an outermost layer of rodlet bundles on aerial cell surfaces, conferring cellular hydrophobicity that supports fungal growth, development and dispersal; whereas Class II form highly ordered films at water-air interfaces through intermolecular interactions but contribute nothing to the rodlet structure. Hah2 is a class I hydrophobin that is involved in aerial growth of mycelia, but does not play a role in pathogenesis. The polypeptide is Class I hydrophobin 2 (Heterobasidion annosum (Root rot fungus)).